We begin with the raw amino-acid sequence, 672 residues long: Beta-galactosidase GanA (672 aa).

Arg105 provides a ligand contact to substrate. Cys109 lines the Zn(2+) pocket. Asn143 is a substrate binding site. The active-site Proton donor is Glu144. Cys149, Cys151, and Cys154 together coordinate Zn(2+). The active-site Nucleophile is the Glu308. Substrate is bound by residues Trp316 and 356–359 (EKLH).

The protein belongs to the glycosyl hydrolase 42 family. Homotrimer.

It carries out the reaction Hydrolysis of terminal non-reducing beta-D-galactose residues in beta-D-galactosides.. With respect to regulation, inhibited by zinc, cobalt and copper ions. Its function is as follows. Involved in galactan degradation. Hydrolyzes galactooligosaccharides released by the endo-beta-1,4-galactanase GanB from galactan. Degrades galactotetraose, galactotriose and galactobiose, generating galactose as the end product. It is unable to use lactose. In vitro, shows maximal activity with o-nitrophenyl-beta-D-galactopyranoside (ONPG) and p-nitrophenyl-beta-D-galactopyranoside (PNPG) as substrates, trace activity with p-nitrophenyl-alpha-L-arabinopyranoside and o-nitrophenyl-beta-D-fucopyranoside as substrates, but no activity with p-nitrophenyl-alpha-D-galactopyranoside, p-nitrophenyl-beta-D-glucopyranoside, o-nitrophenyl-beta-D-xylopyranoside, p-nitrophenyl-beta-D-mannopyranoside or p-nitrophenyl-alpha-L-arabinofuranoside as substrates. This chain is Beta-galactosidase GanA, found in Bacillus subtilis (strain 168).